The sequence spans 207 residues: MPLPDFRLIRLLPLASLVLTACTITSPKGPGKSPDSPQWRQHQQDVRNLNQYQTRGAFAYISDQQKVYARFFWQQTGQDRYRLLLTNPLGSTELELNAQPGNVQLVDNKGQRYTADDAEEMIGKLTGMPIPLNSLRQWILGLPGDATDYKLDDQYRLSEITYSQNGKNWKVVYGGYDTKTQPAMPANMELTEGGQRIKLKMDNWIVK.

Positions 1–21 (MPLPDFRLIRLLPLASLVLTA) are cleaved as a signal peptide. Cysteine 22 carries the N-palmitoyl cysteine lipid modification. The S-diacylglycerol cysteine moiety is linked to residue cysteine 22.

It belongs to the LolB family. Monomer.

Its subcellular location is the cell outer membrane. In terms of biological role, plays a critical role in the incorporation of lipoproteins in the outer membrane after they are released by the LolA protein. This Escherichia fergusonii (strain ATCC 35469 / DSM 13698 / CCUG 18766 / IAM 14443 / JCM 21226 / LMG 7866 / NBRC 102419 / NCTC 12128 / CDC 0568-73) protein is Outer-membrane lipoprotein LolB.